We begin with the raw amino-acid sequence, 422 residues long: Metallocarboxypeptidase A (422 aa).

A signal peptide spans 1-17 (MRSVLSLALLAANVVTA). Residues 18–112 (AVVSPFDYSG…FEAYSAGYAP (95 aa)) constitute a propeptide, activation peptide. Residues 119-419 (SYHSYQDHIS…AGTVAMLKAV (301 aa)) enclose the Peptidase M14 domain. Zn(2+) is bound by residues H179 and E182. Residues 179-182 (HARE), R237, and 254-255 (NR) contribute to the substrate site. C248 and C271 are disulfide-bonded. H309 provides a ligand contact to Zn(2+). Position 310–311 (310–311 (SY)) interacts with substrate. Catalysis depends on E385, which acts as the Proton donor/acceptor.

The protein belongs to the peptidase M14 family. Requires Zn(2+) as cofactor.

The protein localises to the secreted. In terms of biological role, extracellular metalloprotease that contributes to pathogenicity. The chain is Metallocarboxypeptidase A (MCPA) from Trichophyton equinum (Horse ringworm fungus).